We begin with the raw amino-acid sequence, 108 residues long: QESTVIVMLTRVNENGRRKCEKYWPDHREQTTFDNLIVSSINVSEYGQIIKRSFQLWNPNQPGKKLLVEQFHYITWPDHGVPITTSDLFNLRRMVIESQGNNPSPIIV.

The Tyrosine-protein phosphatase domain maps to 1-108; it reads QESTVIVMLT…QGNNPSPIIV (108 aa). Asp-78 contacts substrate.

The protein belongs to the protein-tyrosine phosphatase family.

The enzyme catalyses O-phospho-L-tyrosyl-[protein] + H2O = L-tyrosyl-[protein] + phosphate. The chain is Tyrosine-protein phosphatase 5 (STY-5) from Styela plicata (Wrinkled sea squirt).